The primary structure comprises 202 residues: Matrix protein (202 aa).

Residues 45–48 carry the PPXY motif motif; that stretch reads TGKR. The segment at 125 to 161 is essential for glycoprotein binding; it reads AESRGPLDGEELEYSQEITWDDDSEFIGLQIRVSARQ.

Belongs to the lyssavirus matrix protein family. Homomultimer. Interacts with nucleoprotein and with the cytoplasmic domain of glycoprotein.

The protein resides in the virion membrane. It is found in the host endomembrane system. In terms of biological role, plays a major role in assembly and budding of virion. Completely covers the ribonucleoprotein coil and keep it in condensed bullet-shaped form. Inhibits viral transcription and stimulates replication. Plays a major role in early induction of TRAIL-mediated apoptosis in infected neurons. In Australian bat lyssavirus (isolate Human/AUS/1998) (ABLV), this protein is Matrix protein (M).